The following is a 403-amino-acid chain: Aspartic protease pepA (403 aa).

A signal peptide spans 1-20 (MVLITQLGAALAVFSALTVA). The propeptide at 21 to 67 (APTKGKARFSAPQVGIPKKAKHHPAAAYARALHKFGMKIPKAVSDAA) is activation peptide. The Peptidase A1 domain occupies 82-400 (YVTQVTVGGS…DTQGPRIGFA (319 aa)). Asp-98 is an active-site residue. The N-linked (GlcNAc...) asparagine glycan is linked to Asn-270. The active site involves Asp-293. A disulfide bond links Cys-329 and Cys-362.

It belongs to the peptidase A1 family. In terms of assembly, monomer.

The protein resides in the secreted. In terms of biological role, secreted aspartic endopeptidase that allows assimilation of proteinaceous substrates. The scissile peptide bond is attacked by a nucleophilic water molecule activated by two aspartic residues in the active site. Shows a broad primary substrate specificity. Favors hydrophobic residues at the P1 and P1' positions. This chain is Aspartic protease pepA, found in Arthroderma gypseum (strain ATCC MYA-4604 / CBS 118893) (Microsporum gypseum).